The primary structure comprises 338 residues: Nicotinate-nucleotide--dimethylbenzimidazole phosphoribosyltransferase (338 aa).

Catalysis depends on Glu305, which acts as the Proton acceptor.

The protein belongs to the CobT family.

The enzyme catalyses 5,6-dimethylbenzimidazole + nicotinate beta-D-ribonucleotide = alpha-ribazole 5'-phosphate + nicotinate + H(+). It functions in the pathway nucleoside biosynthesis; alpha-ribazole biosynthesis; alpha-ribazole from 5,6-dimethylbenzimidazole: step 1/2. Functionally, catalyzes the synthesis of alpha-ribazole-5'-phosphate from nicotinate mononucleotide (NAMN) and 5,6-dimethylbenzimidazole (DMB). The chain is Nicotinate-nucleotide--dimethylbenzimidazole phosphoribosyltransferase from Rhizobium meliloti (strain 1021) (Ensifer meliloti).